Consider the following 1438-residue polypeptide: DNA polymerase III PolC-type (1438 aa).

Residues 422–578 (YVVFDVETTG…YDTEATAYIF (157 aa)) enclose the Exonuclease domain.

The protein belongs to the DNA polymerase type-C family. PolC subfamily.

The protein localises to the cytoplasm. It catalyses the reaction DNA(n) + a 2'-deoxyribonucleoside 5'-triphosphate = DNA(n+1) + diphosphate. Required for replicative DNA synthesis. This DNA polymerase also exhibits 3' to 5' exonuclease activity. This Staphylococcus aureus (strain bovine RF122 / ET3-1) protein is DNA polymerase III PolC-type.